The chain runs to 496 residues: Angiopoietin-2 (496 aa).

The N-terminal stretch at 1–18 (MWQIVFLTFGCDLVLASA) is a signal peptide. N-linked (GlcNAc...) asparagine glycans are attached at residues Asn-89, Asn-119, Asn-133, Asn-151, Asn-240, and Asn-304. Positions 159–256 (QLLQHSISTN…QQHDLMETVN (98 aa)) form a coiled coil. The region spanning 280 to 496 (TFRDCAEIFK…TTMMIRPADF (217 aa)) is the Fibrinogen C-terminal domain. Cys-284 and Cys-313 are disulfide-bonded. The Ca(2+) site is built by Asp-429, Asp-431, Cys-433, and Cys-435. 2 disulfide bridges follow: Cys-433/Cys-435 and Cys-437/Cys-450.

In terms of assembly, interacts with TEK/TIE2, competing for the same binding site as ANGPT1. Interacts with ITGA5. Interacts with SVEP1/polydom. Interacts with THBD; this interaction significantly inhibits the generation of activated PC and TAFIa/CPB2 by the thrombin/thrombomodulin complex.

The protein resides in the secreted. Binds to TEK/TIE2, competing for the ANGPT1 binding site, and modulating ANGPT1 signaling. Can induce tyrosine phosphorylation of TEK/TIE2 in the absence of ANGPT1. In the absence of angiogenic inducers, such as VEGF, ANGPT2-mediated loosening of cell-matrix contacts may induce endothelial cell apoptosis with consequent vascular regression. In concert with VEGF, it may facilitate endothelial cell migration and proliferation, thus serving as a permissive angiogenic signal. Involved in the regulation of lymphangiogenesis. In Rattus norvegicus (Rat), this protein is Angiopoietin-2 (Angpt2).